Here is a 93-residue protein sequence, read N- to C-terminus: MADITDIKAILYTEKTIELQENGVIVVQTSPRMTKNGLKEVFKEYFGVTPSKVNSLRQDGKVKRFRGKIGKRADFKKFYVTLPEGAAIANLSA.

The protein belongs to the universal ribosomal protein uL23 family. Part of the 50S ribosomal subunit. Contacts protein L29, and trigger factor when it is bound to the ribosome.

In terms of biological role, one of the early assembly proteins it binds 23S rRNA. One of the proteins that surrounds the polypeptide exit tunnel on the outside of the ribosome. Forms the main docking site for trigger factor binding to the ribosome. The chain is Large ribosomal subunit protein uL23 from Aliarcobacter butzleri (strain RM4018) (Arcobacter butzleri).